The following is a 595-amino-acid chain: MDSVSSSSFLSSTFSLHHSLLRRRSSSPTLLRINSAVVEERSPITNPSDNNDRRNKPKTLHNRTNHTLVSSPPKLRPEMTLATALFTTVEDVINTFIDPPSRPSVDPKHVLSDNFAPVLDELPPTDCEIIHGTLPLSLNGAYIRNGPNPQFLPRGPYHLFDGDGMLHAIKIHNGKATLCSRYVKTYKYNVEKQTGAPVMPNVFSGFNGVTASVARGALTAARVLTGQYNPVNGIGLANTSLAFFSNRLFALGESDLPYAVRLTESGDIETIGRYDFDGKLAMSMTAHPKTDPITGETFAFRYGPVPPFLTYFRFDSAGKKQRDVPIFSMTSPSFLHDFAITKRHAIFAEIQLGMRMNMLDLVLEGGSPVGTDNGKTPRLGVIPKYAGDESEMKWFEVPGFNIIHAINAWDEDDGNSVVLIAPNIMSIEHTLERMDLVHALVEKVKIDLVTGIVRRHPISARNLDFAVINPAFLGRCSRYVYAAIGDPMPKISGVVKLDVSKGDRDDCTVARRMYGSGCYGGEPFFVARDPGNPEAEEDDGYVVTYVHDEVTGESKFLVMDAKSPELEIVAAVRLPRRVPYGFHGLFVKESDLNKL.

The transit peptide at 1-34 directs the protein to the chloroplast; sequence MDSVSSSSFLSSTFSLHHSLLRRRSSSPTLLRIN. The tract at residues 41–74 is disordered; it reads RSPITNPSDNNDRRNKPKTLHNRTNHTLVSSPPK. Basic residues predominate over residues 55–64; sequence NKPKTLHNRT. Residues H287, H336, H404, and H583 each coordinate Fe cation.

Belongs to the carotenoid oxygenase family. In terms of assembly, interacts with VAR3. Interacts with PGM48. The cofactor is Fe(2+). As to expression, mostly expressed in flowers (e.g. sepals and petals), siliques, seeds, leaves and cotyledons.

The protein localises to the plastid. Its subcellular location is the chloroplast. It is found in the plastoglobule. In terms of biological role, may be involved in carotenoid cleavage. The sequence is that of Probable carotenoid cleavage dioxygenase 4, chloroplastic (CCD4) from Arabidopsis thaliana (Mouse-ear cress).